We begin with the raw amino-acid sequence, 372 residues long: Non-structural protein NS2 (372 aa).

The disordered stretch occupies residues 259-326; sequence NQIEKQHTTH…QESEPESPSF (68 aa). Low complexity predominate over residues 299–309; it reads TETTSTSSSHH.

The polypeptide is Non-structural protein NS2 (NS) (Aedes albopictus (Asian tiger mosquito)).